We begin with the raw amino-acid sequence, 220 residues long: uncharacterized protein (220 aa).

A run of 4 helical transmembrane segments spans residues 9–29, 54–74, 105–125, and 177–197; these read LWIT…GSTQ, YAVH…FLAV, VQGI…IHLW, and VLAV…VIEM.

It is found in the cell membrane. This is an uncharacterized protein from Sinorhizobium fredii (strain NBRC 101917 / NGR234).